The primary structure comprises 194 residues: NAD(P)H:quinone oxidoreductase (194 aa).

The protein belongs to the SsuE family. In terms of assembly, homotetramer. It depends on FMN as a cofactor.

It catalyses the reaction a quinone + NADH + H(+) = a quinol + NAD(+). The catalysed reaction is a quinone + NADPH + H(+) = a quinol + NADP(+). The enzyme apparently serves as a quinone reductase in connection with conjugation reactions of hydroquinones involved in detoxification pathways. The polypeptide is NAD(P)H:quinone oxidoreductase (Solanum tuberosum (Potato)).